A 316-amino-acid polypeptide reads, in one-letter code: Olfactory receptor class A-like protein 1 (316 aa).

Over 1–8 (MDLCVTIK) the chain is Extracellular. A helical transmembrane segment spans residues 9-29 (GVSFLLQAGLGILANALVLLA). The Cytoplasmic portion of the chain corresponds to 30–39 (YAHIRLAEAR). The chain crosses the membrane as a helical span at residues 40 to 60 (LQPVDAILCHLALVDLLLLLT). Over 61 to 97 (RGVPQTMTVFGMRNLLDDTGCKVVIYTYRIARALSVC) the chain is Extracellular. Cysteine 81 and cysteine 169 are oxidised to a cystine. A helical membrane pass occupies residues 98–118 (ITCMLSVFQAVTVAPAAGPLL). Topologically, residues 119-132 (SGVKARLPQLLAPT) are cytoplasmic. A helical transmembrane segment spans residues 133 to 153 (FAALWFINMAVCIAAPFFSVA). Over 154–187 (PRNGTVPPFTLNLGFCHVDFHDNLSYVLNGVAVS) the chain is Extracellular. Residues asparagine 156 and asparagine 176 are each glycosylated (N-linked (GlcNAc...) asparagine). A helical membrane pass occupies residues 188 to 208 (VRDFAFVGAMLASSGFILLLL). The Cytoplasmic segment spans residues 209–233 (HRHRRQVRAVRRSQGSTMETRAART). A helical transmembrane segment spans residues 234–254 (VLMLVILYSVFFGIDNVIWIY). The Extracellular segment spans residues 255–264 (MLTVAQVPPV). A helical membrane pass occupies residues 265–285 (VADMRVFFSSCYASLSPFLII). Residues 286–316 (SSNRKLKARMVCATSEQERQAEDGKNSSGKN) are Cytoplasmic-facing.

It belongs to the G-protein coupled receptor 1 family. As to expression, highly expressed in the olfactory rosette where it localizes to a subset of olfactory sensory neurons, mainly in the apical region of the neuroepithelium. Not detected in other tissues tested.

It localises to the cell membrane. Its function is as follows. Probable pheromone receptor. Shows high specificity for 4-hydroxyphenylacetic acid. Activation of the receptor stimulates intracellular calcium release. In Danio rerio (Zebrafish), this protein is Olfactory receptor class A-like protein 1.